Consider the following 360-residue polypeptide: Glycerol-1-phosphate dehydrogenase [NAD(P)+] (360 aa).

NAD(+) is bound by residues 108–112 (GRVID) and 130–133 (TAAS). Asp-135 lines the substrate pocket. Ser-139 provides a ligand contact to NAD(+). Residue Asp-182 coordinates substrate. Zn(2+)-binding residues include Asp-182 and His-262. His-266 is a binding site for substrate. His-278 provides a ligand contact to Zn(2+).

The protein belongs to the glycerol-1-phosphate dehydrogenase family. Zn(2+) is required as a cofactor.

It is found in the cytoplasm. The catalysed reaction is sn-glycerol 1-phosphate + NAD(+) = dihydroxyacetone phosphate + NADH + H(+). It carries out the reaction sn-glycerol 1-phosphate + NADP(+) = dihydroxyacetone phosphate + NADPH + H(+). It participates in membrane lipid metabolism; glycerophospholipid metabolism. Catalyzes the NAD(P)H-dependent reduction of dihydroxyacetonephosphate (DHAP or glycerone phosphate) to glycerol 1-phosphate (G1P). The G1P thus generated is used as the glycerophosphate backbone of phospholipids in the cellular membranes of Archaea. The sequence is that of Glycerol-1-phosphate dehydrogenase [NAD(P)+] from Methanocorpusculum labreanum (strain ATCC 43576 / DSM 4855 / Z).